A 224-amino-acid chain; its full sequence is Oxalate oxidase GF-3.8 (224 aa).

A signal peptide spans 1 to 23 (MGYSKNIASGMFAMLLLASAVLS). The cysteines at positions 33 and 49 are disulfide-linked. The Cupin type-1 domain maps to 63–214 (SKLAKAGNTS…ALRVEAGVVE (152 aa)). Asn-70 and Asn-75 each carry an N-linked (GlcNAc...) asparagine glycan. The Mn(2+) site is built by His-111, His-113, Glu-118, and His-160.

The protein belongs to the germin family. Oligomer (believed to be a pentamer but probably hexamer).

It localises to the secreted. The protein resides in the extracellular space. Its subcellular location is the apoplast. The protein localises to the cytoplasm. It is found in the cell wall. The catalysed reaction is oxalate + O2 + 2 H(+) = H2O2 + 2 CO2. In terms of biological role, produces developmental and stress-related release of hydrogen peroxide in the apoplast. May play an important role in several aspects of plant growth and defense mechanisms. The sequence is that of Oxalate oxidase GF-3.8 from Triticum aestivum (Wheat).